Reading from the N-terminus, the 381-residue chain is L-lactate dehydrogenase (381 aa).

The FMN hydroxy acid dehydrogenase domain maps to M1–K380. Y24 serves as a coordination point for substrate. FMN contacts are provided by S106 and Q127. Y129 lines the substrate pocket. Residue T155 coordinates FMN. R164 is a binding site for substrate. K251 is an FMN binding site. The Proton acceptor role is filled by H275. Residue R278 participates in substrate binding. Residue D306–R330 coordinates FMN.

It belongs to the FMN-dependent alpha-hydroxy acid dehydrogenase family. FMN is required as a cofactor.

Its subcellular location is the cell inner membrane. The enzyme catalyses (S)-lactate + A = pyruvate + AH2. Its function is as follows. Catalyzes the conversion of L-lactate to pyruvate. Is coupled to the respiratory chain. The polypeptide is L-lactate dehydrogenase (Actinobacillus pleuropneumoniae serotype 5b (strain L20)).